The following is a 248-amino-acid chain: 1-(5-phosphoribosyl)-5-[(5-phosphoribosylamino)methylideneamino] imidazole-4-carboxamide isomerase (248 aa).

Asp-8 serves as the catalytic Proton acceptor. Asp-127 serves as the catalytic Proton donor.

Belongs to the HisA/HisF family.

Its subcellular location is the cytoplasm. It carries out the reaction 1-(5-phospho-beta-D-ribosyl)-5-[(5-phospho-beta-D-ribosylamino)methylideneamino]imidazole-4-carboxamide = 5-[(5-phospho-1-deoxy-D-ribulos-1-ylimino)methylamino]-1-(5-phospho-beta-D-ribosyl)imidazole-4-carboxamide. The protein operates within amino-acid biosynthesis; L-histidine biosynthesis; L-histidine from 5-phospho-alpha-D-ribose 1-diphosphate: step 4/9. The sequence is that of 1-(5-phosphoribosyl)-5-[(5-phosphoribosylamino)methylideneamino] imidazole-4-carboxamide isomerase from Thermotoga neapolitana (strain ATCC 49049 / DSM 4359 / NBRC 107923 / NS-E).